The primary structure comprises 256 residues: Glucosamine-6-phosphate deaminase (256 aa).

Asp68 acts as the Proton acceptor; for enolization step in catalysis. Asn137 functions as the For ring-opening step in the catalytic mechanism. The active-site Proton acceptor; for ring-opening step is His139. Residue Glu144 is the For ring-opening step of the active site.

Belongs to the glucosamine/galactosamine-6-phosphate isomerase family. NagB subfamily.

It catalyses the reaction alpha-D-glucosamine 6-phosphate + H2O = beta-D-fructose 6-phosphate + NH4(+). It functions in the pathway amino-sugar metabolism; N-acetylneuraminate degradation; D-fructose 6-phosphate from N-acetylneuraminate: step 5/5. Functionally, catalyzes the reversible isomerization-deamination of glucosamine 6-phosphate (GlcN6P) to form fructose 6-phosphate (Fru6P) and ammonium ion. The protein is Glucosamine-6-phosphate deaminase of Mycoplasmopsis pulmonis (strain UAB CTIP) (Mycoplasma pulmonis).